The following is a 354-amino-acid chain: Ferredoxin--NADP reductase (354 aa).

FAD is bound by residues aspartate 39, glutamine 47, tyrosine 52, valine 92, phenylalanine 127, aspartate 296, and threonine 337.

It belongs to the ferredoxin--NADP reductase type 2 family. Homodimer. FAD is required as a cofactor.

The catalysed reaction is 2 reduced [2Fe-2S]-[ferredoxin] + NADP(+) + H(+) = 2 oxidized [2Fe-2S]-[ferredoxin] + NADPH. The chain is Ferredoxin--NADP reductase from Albidiferax ferrireducens (strain ATCC BAA-621 / DSM 15236 / T118) (Rhodoferax ferrireducens).